We begin with the raw amino-acid sequence, 1202 residues long: DNA-directed RNA polymerase subunit beta (1202 aa).

Residues 1154–1202 (NMDEDDDEVVNVDALAKYAEEHKADDKKNEEENKSEATSTTTDDKTNQN) are disordered. Positions 1171-1188 (YAEEHKADDKKNEEENKS) are enriched in basic and acidic residues.

It belongs to the RNA polymerase beta chain family. The RNAP catalytic core consists of 2 alpha, 1 beta, 1 beta' and 1 omega subunit. When a sigma factor is associated with the core the holoenzyme is formed, which can initiate transcription.

The enzyme catalyses RNA(n) + a ribonucleoside 5'-triphosphate = RNA(n+1) + diphosphate. DNA-dependent RNA polymerase catalyzes the transcription of DNA into RNA using the four ribonucleoside triphosphates as substrates. This chain is DNA-directed RNA polymerase subunit beta, found in Limosilactobacillus reuteri (strain DSM 20016) (Lactobacillus reuteri).